Here is a 505-residue protein sequence, read N- to C-terminus: Annexin A11 (505 aa).

2 stretches are compositionally biased toward pro residues: residues 1 to 17 and 99 to 160; these read MSYPGYPPPPGGYPPAA and PVPP…PVPL. Disordered regions lie at residues 1–38 and 84–199; these read MSYPGYPPPPGGYPPAAPGGGPWGGAAYPPPPSMPPIG and PVPP…DAPG. The segment covering 161–177 has biased composition (low complexity); it reads PGQQQPVPSYPGYPGSG. Annexin repeat units lie at residues 200–271, 272–343, 355–427, and 431–502; these read FDPL…ALMK, TPVL…SLSQ, SLAQ…AVVK, and NTPA…KICG. Residues lysine 248 and lysine 255 each carry the N6-acetyllysine modification. Lysine 479 carries the post-translational modification N6-acetyllysine.

The protein belongs to the annexin family. Interacts with S100A6. Interacts with PDCD6 in a calcium-dependent manner. Interacts with KIF23 during cytokinesis.

The protein resides in the cytoplasm. It is found in the melanosome. It localises to the nucleus envelope. The protein localises to the nucleus. Its subcellular location is the nucleoplasm. The protein resides in the cytoskeleton. It is found in the spindle. Its function is as follows. Binds specifically to calcyclin in a calcium-dependent manner. Required for midbody formation and completion of the terminal phase of cytokinesis. The sequence is that of Annexin A11 (ANXA11) from Homo sapiens (Human).